A 177-amino-acid polypeptide reads, in one-letter code: Probable DNA-directed RNA polymerase subunit delta (177 aa).

In terms of domain architecture, HTH HARE-type spans 14-81; it reads CSMIEVVHSV…GENRWGLRSW (68 aa). The segment at 91–177 is disordered; sequence ILPQPKPKKK…DETEEEEEEL (87 aa). Over residues 106–177 the composition is skewed to acidic residues; that stretch reads DGFDDYIEED…DETEEEEEEL (72 aa).

This sequence belongs to the RpoE family. As to quaternary structure, RNAP is composed of a core of 2 alpha, a beta and a beta' subunits. The core is associated with a delta subunit and one of several sigma factors.

In terms of biological role, participates in both the initiation and recycling phases of transcription. In the presence of the delta subunit, RNAP displays an increased specificity of transcription, a decreased affinity for nucleic acids, and an increased efficiency of RNA synthesis because of enhanced recycling. In Bacillus cereus (strain G9842), this protein is Probable DNA-directed RNA polymerase subunit delta.